Here is a 393-residue protein sequence, read N- to C-terminus: Telomeric repeat-binding factor 2-interacting protein 1 (393 aa).

Position 2 is an N-acetylalanine (Ala2). Ser36 and Ser43 each carry phosphoserine. The 24-residue stretch at 78–101 (FISTQYILDCVDRNEKLDLEAYRL) folds into the BRCT domain. Residues 104 to 132 (TEQASDPKPGASTEGSTEPEPQPLTGRIA) are disordered. Lys111 is covalently cross-linked (Glycyl lysine isopeptide (Lys-Gly) (interchain with G-Cter in SUMO2)). A Myb-like domain is found at 125–185 (QPLTGRIAYT…SLKDRYLKHL (61 aa)). Phosphoserine occurs at positions 151 and 153. Lys191 participates in a covalent cross-link: Glycyl lysine isopeptide (Lys-Gly) (interchain with G-Cter in SUMO2). The segment at 193–304 (LLGNAPVSPS…EEEPKVSTQE (112 aa)) is disordered. Residues Ser200 and Ser203 each carry the phosphoserine modification. Residues Lys205, Lys209, and Lys237 each participate in a glycyl lysine isopeptide (Lys-Gly) (interchain with G-Cter in SUMO2) cross-link. The span at 223–252 (QNKRAPDLPEEECVKGEIKENGEADNKLFE) shows a compositional bias: basic and acidic residues. Positions 282-297 (TPEEDSETQPDEEEEE) are enriched in acidic residues. A Glycyl lysine isopeptide (Lys-Gly) (interchain with G-Cter in SUMO2) cross-link involves residue Lys366. Positions 377–393 (KKFGAQNVARRIEFRKK) match the Nuclear localization signal motif.

This sequence belongs to the RAP1 family. Homodimer. Component of the shelterin complex (telosome) composed of TERF1, TERF2, TINF2, TERF2IP ACD and POT1. Binds to TERF2 (but not TERF1) with its C-terminus. Interacts with SLX4/BTBD12. Interacts with TERF2; the interaction is direct. Does not interact with TERF1. Associates with the I-kappa-B-kinase (IKK) core complex, composed of CHUK, IKBKB and IKBKG.

The protein resides in the nucleus. The protein localises to the cytoplasm. It localises to the chromosome. Its subcellular location is the telomere. Functionally, acts both as a regulator of telomere function and as a transcription regulator. Involved in the regulation of telomere length and protection as a component of the shelterin complex (telosome). In contrast to other components of the shelterin complex, it is dispensible for telomere capping and does not participate in the protection of telomeres against non-homologous end-joining (NHEJ)-mediated repair. Instead, it is required to negatively regulate telomere recombination and is essential for repressing homology-directed repair (HDR), which can affect telomere length. Does not bind DNA directly: recruited to telomeric double-stranded 5'-TTAGGG-3' repeats via its interaction with TERF2. Independently of its function in telomeres, also acts as a transcription regulator: recruited to extratelomeric 5'-TTAGGG-3' sites via its association with TERF2 or other factors, and regulates gene expression. When cytoplasmic, associates with the I-kappa-B-kinase (IKK) complex and acts as a regulator of the NF-kappa-B signaling by promoting IKK-mediated phosphorylation of RELA/p65, leading to activate expression of NF-kappa-B target genes. The protein is Telomeric repeat-binding factor 2-interacting protein 1 (Terf2ip) of Mus musculus (Mouse).